Reading from the N-terminus, the 215-residue chain is Urease accessory protein UreG (215 aa).

24-31 (GPVGSGKT) is a GTP binding site.

The protein belongs to the SIMIBI class G3E GTPase family. UreG subfamily. Homodimer. UreD, UreF and UreG form a complex that acts as a GTP-hydrolysis-dependent molecular chaperone, activating the urease apoprotein by helping to assemble the nickel containing metallocenter of UreC. The UreE protein probably delivers the nickel.

The protein localises to the cytoplasm. Its function is as follows. Facilitates the functional incorporation of the urease nickel metallocenter. This process requires GTP hydrolysis, probably effectuated by UreG. This is Urease accessory protein UreG from Burkholderia ambifaria (strain MC40-6).